The chain runs to 260 residues: Transmembrane protein 106C (260 aa).

Glycine 2 carries the N-myristoyl glycine lipid modification. A helical transmembrane segment spans residues 85 to 105 (YVLLSVLLCLLASGLVFFFLF). N-linked (GlcNAc...) asparagine glycosylation is present at asparagine 184. The helical transmembrane segment at 196–216 (SYVYFYCTLPAIRVHNIVIFM) threads the bilayer.

Belongs to the TMEM106 family. Interacts with TMEM106B.

It is found in the endoplasmic reticulum membrane. It localises to the membrane. This chain is Transmembrane protein 106C (Tmem106c), found in Mus musculus (Mouse).